Here is a 463-residue protein sequence, read N- to C-terminus: Glutamate--tRNA ligase (463 aa).

The 'HIGH' region signature appears at 8–18 (PSPTGYLHIGG). The short motif at 236 to 240 (RLSKR) is the 'KMSKS' region element. Lys-239 lines the ATP pocket.

It belongs to the class-I aminoacyl-tRNA synthetase family. Glutamate--tRNA ligase type 1 subfamily. In terms of assembly, monomer.

It is found in the cytoplasm. It catalyses the reaction tRNA(Glu) + L-glutamate + ATP = L-glutamyl-tRNA(Glu) + AMP + diphosphate. Catalyzes the attachment of glutamate to tRNA(Glu) in a two-step reaction: glutamate is first activated by ATP to form Glu-AMP and then transferred to the acceptor end of tRNA(Glu). The protein is Glutamate--tRNA ligase of Nitrosomonas europaea (strain ATCC 19718 / CIP 103999 / KCTC 2705 / NBRC 14298).